Reading from the N-terminus, the 464-residue chain is Argininosuccinate lyase (464 aa).

This sequence belongs to the lyase 1 family. Argininosuccinate lyase subfamily.

The protein localises to the cytoplasm. The enzyme catalyses 2-(N(omega)-L-arginino)succinate = fumarate + L-arginine. Its pathway is amino-acid biosynthesis; L-arginine biosynthesis; L-arginine from L-ornithine and carbamoyl phosphate: step 3/3. This chain is Argininosuccinate lyase, found in Frankia casuarinae (strain DSM 45818 / CECT 9043 / HFP020203 / CcI3).